The sequence spans 183 residues: Probable cobalt-precorrin-6B C(15)-methyltransferase (decarboxylating) (183 aa).

S-adenosyl-L-methionine contacts are provided by residues Thr-19, 43-47 (GCGSG), Asp-64, and Ala-92.

This sequence belongs to the methyltransferase superfamily. Archaeal-type CbiT family.

The enzyme catalyses Co-precorrin-6B + S-adenosyl-L-methionine = Co-precorrin-7 + S-adenosyl-L-homocysteine + CO2. It participates in cofactor biosynthesis; adenosylcobalamin biosynthesis; cob(II)yrinate a,c-diamide from sirohydrochlorin (anaerobic route): step 8/10. Its function is as follows. Catalyzes the methylation of C-15 in cobalt-precorrin-6B followed by the decarboxylation of C-12 to form cobalt-precorrin-7. The chain is Probable cobalt-precorrin-6B C(15)-methyltransferase (decarboxylating) from Methanocaldococcus jannaschii (strain ATCC 43067 / DSM 2661 / JAL-1 / JCM 10045 / NBRC 100440) (Methanococcus jannaschii).